We begin with the raw amino-acid sequence, 181 residues long: Large ribosomal subunit protein uL5 (181 aa).

The protein belongs to the universal ribosomal protein uL5 family. Part of the 50S ribosomal subunit; part of the 5S rRNA/L5/L18/L25 subcomplex. Contacts the 5S rRNA and the P site tRNA. Forms a bridge to the 30S subunit in the 70S ribosome.

Functionally, this is one of the proteins that bind and probably mediate the attachment of the 5S RNA into the large ribosomal subunit, where it forms part of the central protuberance. In the 70S ribosome it contacts protein S13 of the 30S subunit (bridge B1b), connecting the 2 subunits; this bridge is implicated in subunit movement. Contacts the P site tRNA; the 5S rRNA and some of its associated proteins might help stabilize positioning of ribosome-bound tRNAs. This is Large ribosomal subunit protein uL5 from Campylobacter lari (strain RM2100 / D67 / ATCC BAA-1060).